Consider the following 102-residue polypeptide: Lipopolysaccharide assembly protein A (102 aa).

Over 1–2 (MK) the chain is Cytoplasmic. A helical membrane pass occupies residues 3-23 (YLLIFLLVLAIFVISVTLGAQ). At 24 to 43 (NDQQVTFNYLLAQGEYRIST) the chain is on the periplasmic side. The chain crosses the membrane as a helical span at residues 44 to 64 (LLAVLFAAGFAIGWLICGLFW). A coiled-coil region spans residues 64 to 92 (WLRVRVSLARAERKIKRLENQLSPATDVA). Over 65-102 (LRVRVSLARAERKIKRLENQLSPATDVAVVPHSSAAKE) the chain is Cytoplasmic.

This sequence belongs to the LapA family.

The protein resides in the cell inner membrane. In terms of biological role, involved in the assembly of lipopolysaccharide (LPS). In Escherichia coli (strain K12), this protein is Lipopolysaccharide assembly protein A.